The primary structure comprises 464 residues: UDP-glycosyltransferase 76C1 (464 aa).

UDP-alpha-D-glucose-binding positions include S279, 338-340 (APQ), 355-363 (HNGWNSTLE), and 377-380 (KWDQ).

Belongs to the UDP-glycosyltransferase family.

Inhibited by olomoucine and 3-isobutyl-1-methylxanthine. Involved in the N-glucosylation of cytokinins. Catalyzes the formation of both the 7-N and the 9-N-glucosides. The sequence is that of UDP-glycosyltransferase 76C1 (UGT76C1) from Arabidopsis thaliana (Mouse-ear cress).